The chain runs to 1427 residues: DNA-directed RNA polymerase subunit beta' (1427 aa).

Zn(2+) is bound by residues Cys66, Cys68, Cys81, and Cys84. The Mg(2+) site is built by Asp472, Asp474, and Asp476. The Zn(2+) site is built by Cys815, Cys889, Cys896, and Cys899.

Belongs to the RNA polymerase beta' chain family. The RNAP catalytic core consists of 2 alpha, 1 beta, 1 beta' and 1 omega subunit. When a sigma factor is associated with the core the holoenzyme is formed, which can initiate transcription. The cofactor is Mg(2+). It depends on Zn(2+) as a cofactor.

The catalysed reaction is RNA(n) + a ribonucleoside 5'-triphosphate = RNA(n+1) + diphosphate. DNA-dependent RNA polymerase catalyzes the transcription of DNA into RNA using the four ribonucleoside triphosphates as substrates. The chain is DNA-directed RNA polymerase subunit beta' from Bacteroides thetaiotaomicron (strain ATCC 29148 / DSM 2079 / JCM 5827 / CCUG 10774 / NCTC 10582 / VPI-5482 / E50).